Consider the following 646-residue polypeptide: Depudecin biosynthesis cluster-specific transcription activator DEP6 (646 aa).

The zn(2)-C6 fungal-type DNA-binding region spans 16–43 (CEICRERKVRCDRALPKCRRCDRLNQPC). Disordered stretches follow at residues 76–130 (TTAA…SQSQ) and 345–366 (KSEHSQGMQNRETQSGPRLALP). Residues 349–360 (SQGMQNRETQSG) show a composition bias toward polar residues.

Its subcellular location is the nucleus. Transcription factor that positively regulates the expression of the gene cluster that mediates the biosynthesis of depudecin, a highly oxidized eleven-carbon linear polyketide that acts as a histone deacetylase (HDAC) inhibitor and makes a small contribution to pathogenesis. This is Depudecin biosynthesis cluster-specific transcription activator DEP6 from Alternaria brassicicola (Dark leaf spot agent).